The sequence spans 380 residues: Glutamate 5-kinase (380 aa).

Lys20 is a binding site for ATP. Substrate-binding residues include Ser59, Asp146, and Asn158. Position 220 to 226 (220 to 226 (TGGMYSK)) interacts with ATP. The PUA domain maps to 285–363 (SGTVTVDEGA…HEVAAILGDA (79 aa)).

It belongs to the glutamate 5-kinase family.

The protein resides in the cytoplasm. It catalyses the reaction L-glutamate + ATP = L-glutamyl 5-phosphate + ADP. It participates in amino-acid biosynthesis; L-proline biosynthesis; L-glutamate 5-semialdehyde from L-glutamate: step 1/2. Its function is as follows. Catalyzes the transfer of a phosphate group to glutamate to form L-glutamate 5-phosphate. This is Glutamate 5-kinase from Nitratidesulfovibrio vulgaris (strain ATCC 29579 / DSM 644 / CCUG 34227 / NCIMB 8303 / VKM B-1760 / Hildenborough) (Desulfovibrio vulgaris).